Reading from the N-terminus, the 530-residue chain is Membrane-bound lytic murein transglycosylase F (530 aa).

The N-terminal stretch at 1 to 27 (MTPFAYKLPIRALWLGLLSLLLVGCQI) is a signal peptide. The interval 28–279 (DSEPKSELEK…SLEEKYIGHI (252 aa)) is non-LT domain. The interval 280–530 (GAFDYVDTRA…SAKPSTESKN (251 aa)) is LT domain. Glutamate 324 is an active-site residue. Residues 505-530 (ALESESLENSESSAEPSAKPSTESKN) are disordered. Residues 513–530 (NSESSAEPSAKPSTESKN) show a composition bias toward low complexity.

In the N-terminal section; belongs to the bacterial solute-binding protein 3 family. This sequence in the C-terminal section; belongs to the transglycosylase Slt family.

Its subcellular location is the cell outer membrane. It carries out the reaction Exolytic cleavage of the (1-&gt;4)-beta-glycosidic linkage between N-acetylmuramic acid (MurNAc) and N-acetylglucosamine (GlcNAc) residues in peptidoglycan, from either the reducing or the non-reducing ends of the peptidoglycan chains, with concomitant formation of a 1,6-anhydrobond in the MurNAc residue.. Murein-degrading enzyme that degrades murein glycan strands and insoluble, high-molecular weight murein sacculi, with the concomitant formation of a 1,6-anhydromuramoyl product. Lytic transglycosylases (LTs) play an integral role in the metabolism of the peptidoglycan (PG) sacculus. Their lytic action creates space within the PG sacculus to allow for its expansion as well as for the insertion of various structures such as secretion systems and flagella. The protein is Membrane-bound lytic murein transglycosylase F of Vibrio cholerae serotype O1 (strain ATCC 39541 / Classical Ogawa 395 / O395).